The chain runs to 461 residues: Transcriptional activator RocR (461 aa).

A 4-aspartylphosphate modification is found at D57. Residues 143-372 (ILGTSPAIQD…EHMIEGAMNF (230 aa)) form the Sigma-54 factor interaction domain. Residues 171-178 (GETGTGKE) and 233-242 (AHGGTLLLDE) each bind ATP. The segment at residues 434 to 453 (ISKAAQELGISRQSLQYRLK) is a DNA-binding region (H-T-H motif).

Functionally, positive regulator of arginine catabolism. Controls the transcription of the two operons rocABC and rocDEF and probably acts by binding to the corresponding upstream activating sequences. This Bacillus subtilis (strain 168) protein is Transcriptional activator RocR (rocR).